A 416-amino-acid polypeptide reads, in one-letter code: Doublesex- and mab-3-related transcription factor A2 (416 aa).

Positions 25–72 form a DNA-binding region, DM; sequence CARCRNHGVVSALKGHKRYCRWKDCMCAKCTLIAERQRVMAAQVALRR. The segment covering 131-154 has biased composition (polar residues); that stretch reads FSKGQLSGPTTPQQAAGKSASAES. The tract at residues 131–226 is disordered; it reads FSKGQLSGPT…PSPSSAASRH (96 aa). Low complexity predominate over residues 197-207; the sequence is GSVSSIGSDSG. Residues 227-262 form the DMA domain; that stretch reads MNAIDILTRVFPSHKRSILELVLQGCGKDVVQAIEQ.

It belongs to the DMRT family.

Its subcellular location is the nucleus. Functionally, may be involved in sexual development. The protein is Doublesex- and mab-3-related transcription factor A2 (dmrta2) of Takifugu rubripes (Japanese pufferfish).